Consider the following 84-residue polypeptide: Phosphoribosylformylglycinamidine synthase subunit PurS (84 aa).

This sequence belongs to the PurS family. Homodimer. Part of the FGAM synthase complex composed of 1 PurL, 1 PurQ and 2 PurS subunits.

The protein localises to the cytoplasm. The enzyme catalyses N(2)-formyl-N(1)-(5-phospho-beta-D-ribosyl)glycinamide + L-glutamine + ATP + H2O = 2-formamido-N(1)-(5-O-phospho-beta-D-ribosyl)acetamidine + L-glutamate + ADP + phosphate + H(+). Its pathway is purine metabolism; IMP biosynthesis via de novo pathway; 5-amino-1-(5-phospho-D-ribosyl)imidazole from N(2)-formyl-N(1)-(5-phospho-D-ribosyl)glycinamide: step 1/2. Part of the phosphoribosylformylglycinamidine synthase complex involved in the purines biosynthetic pathway. Catalyzes the ATP-dependent conversion of formylglycinamide ribonucleotide (FGAR) and glutamine to yield formylglycinamidine ribonucleotide (FGAM) and glutamate. The FGAM synthase complex is composed of three subunits. PurQ produces an ammonia molecule by converting glutamine to glutamate. PurL transfers the ammonia molecule to FGAR to form FGAM in an ATP-dependent manner. PurS interacts with PurQ and PurL and is thought to assist in the transfer of the ammonia molecule from PurQ to PurL. This chain is Phosphoribosylformylglycinamidine synthase subunit PurS, found in Methanothermobacter thermautotrophicus (strain ATCC 29096 / DSM 1053 / JCM 10044 / NBRC 100330 / Delta H) (Methanobacterium thermoautotrophicum).